Consider the following 240-residue polypeptide: DNA repair protein RecO (240 aa).

The protein belongs to the RecO family.

Involved in DNA repair and RecF pathway recombination. The polypeptide is DNA repair protein RecO (Wolbachia pipientis wMel).